Consider the following 64-residue polypeptide: VRDAYIAKPHNCVYECARNEYCNDLCTKDGAKSGYCQWVGKYGNGCWCIELPDNVPIRIPGNCH.

An LCN-type CS-alpha/beta domain is found at 2–64; it reads RDAYIAKPHN…VPIRIPGNCH (63 aa). 4 disulfides stabilise this stretch: C12/C63, C16/C36, C22/C46, and C26/C48.

The protein belongs to the long (4 C-C) scorpion toxin superfamily. Sodium channel inhibitor family. Alpha subfamily. Expressed by the venom gland.

It is found in the secreted. In terms of biological role, binds to sodium channels (Nav) and inhibits the inactivation of the activated channels, thereby blocking neuronal transmission. This toxin is active against mammals and insects. BmK-II is 6-fold less toxic than BmK-I. In Olivierus martensii (Manchurian scorpion), this protein is Neurotoxin BmK-II.